The primary structure comprises 243 residues: tRNA (guanine-N(1)-)-methyltransferase (243 aa).

S-adenosyl-L-methionine is bound by residues Gly113 and 133 to 138 (IGDFVL).

The protein belongs to the RNA methyltransferase TrmD family. As to quaternary structure, homodimer.

Its subcellular location is the cytoplasm. It catalyses the reaction guanosine(37) in tRNA + S-adenosyl-L-methionine = N(1)-methylguanosine(37) in tRNA + S-adenosyl-L-homocysteine + H(+). Functionally, specifically methylates guanosine-37 in various tRNAs. This is tRNA (guanine-N(1)-)-methyltransferase from Bacillus licheniformis (strain ATCC 14580 / DSM 13 / JCM 2505 / CCUG 7422 / NBRC 12200 / NCIMB 9375 / NCTC 10341 / NRRL NRS-1264 / Gibson 46).